A 391-amino-acid chain; its full sequence is Formate-dependent phosphoribosylglycinamide formyltransferase (391 aa).

Residues 20-21 and Glu-80 contribute to the N(1)-(5-phospho-beta-D-ribosyl)glycinamide site; that span reads EL. Residues Arg-112, Lys-153, 158-163, 193-196, and Glu-201 each bind ATP; these read SSGKGQ and EGFV. One can recognise an ATP-grasp domain in the interval 117–306; sequence RLAAEELGLP…EFALHVRAFT (190 aa). The Mg(2+) site is built by Glu-265 and Glu-277. Residues Asp-284, Lys-354, and 361–362 contribute to the N(1)-(5-phospho-beta-D-ribosyl)glycinamide site; that span reads RR.

It belongs to the PurK/PurT family. In terms of assembly, homodimer.

It carries out the reaction N(1)-(5-phospho-beta-D-ribosyl)glycinamide + formate + ATP = N(2)-formyl-N(1)-(5-phospho-beta-D-ribosyl)glycinamide + ADP + phosphate + H(+). Its pathway is purine metabolism; IMP biosynthesis via de novo pathway; N(2)-formyl-N(1)-(5-phospho-D-ribosyl)glycinamide from N(1)-(5-phospho-D-ribosyl)glycinamide (formate route): step 1/1. In terms of biological role, involved in the de novo purine biosynthesis. Catalyzes the transfer of formate to 5-phospho-ribosyl-glycinamide (GAR), producing 5-phospho-ribosyl-N-formylglycinamide (FGAR). Formate is provided by PurU via hydrolysis of 10-formyl-tetrahydrofolate. The protein is Formate-dependent phosphoribosylglycinamide formyltransferase of Vibrio cholerae serotype O1 (strain ATCC 39315 / El Tor Inaba N16961).